The chain runs to 225 residues: Large ribosomal subunit protein uL4 (225 aa).

Positions 46–102 (KRQGTHATKGRGEVRGGGRKPFRQKGTGRARQGSIRAPHFTGGGTVHGPQPRDYSQR) are disordered. Residues 62-73 (GGRKPFRQKGTG) show a composition bias toward basic residues.

It belongs to the universal ribosomal protein uL4 family. Part of the 50S ribosomal subunit.

Its function is as follows. One of the primary rRNA binding proteins, this protein initially binds near the 5'-end of the 23S rRNA. It is important during the early stages of 50S assembly. It makes multiple contacts with different domains of the 23S rRNA in the assembled 50S subunit and ribosome. Functionally, forms part of the polypeptide exit tunnel. The protein is Large ribosomal subunit protein uL4 of Corynebacterium urealyticum (strain ATCC 43042 / DSM 7109).